The sequence spans 305 residues: Serine/threonine-protein phosphatase PP-X isozyme 2 (305 aa).

Residues Asp-51, His-53, Asp-79, and Asn-111 each contribute to the Mn(2+) site. His-112 acts as the Proton donor in catalysis. Positions 161 and 236 each coordinate Mn(2+).

Belongs to the PPP phosphatase family. PP-4 (PP-X) subfamily. Mn(2+) is required as a cofactor. As to expression, ubiquitous, mostly expressed in root mersitems, flowers, and vascular tissues.

Its subcellular location is the plastid stroma. It carries out the reaction O-phospho-L-seryl-[protein] + H2O = L-seryl-[protein] + phosphate. The enzyme catalyses O-phospho-L-threonyl-[protein] + H2O = L-threonyl-[protein] + phosphate. The polypeptide is Serine/threonine-protein phosphatase PP-X isozyme 2 (PPX2) (Arabidopsis thaliana (Mouse-ear cress)).